Reading from the N-terminus, the 270-residue chain is Checkpoint signal transducer rad24 (270 aa).

Phosphoserine occurs at positions 34 and 66. Residues 242 to 270 form a disordered region; sequence AAAGGNTEGAQENAPSNAPEGEAEPKADA.

Belongs to the 14-3-3 family. In terms of assembly, homodimer. Binds preferentially to mei2 phosphorylated by ran1/pat1. Binds preferentially to cdc25 phosphorylated by srk1 during G2; the interaction is increased during osmotic stress. Interacts with byr2. Interacts with rad25.

Its subcellular location is the cytoplasm. In terms of biological role, acts in cell cycle and stress checkpoint signaling by sequestering signal transducers regulated by the checkpoints. Required for the DNA damage checkpoint that ensures that DNA damage is repaired before mitosis is attempted. During environmental stress, sequesters srk1-phosphorylated cdc25 in the cytoplasm to delay the G2/M transition. Sequesters byr2 in the cytoplasm to prevent its translocation to the plasma membrane. Sequesters ran1/pat1-phosphorylated mei2 from its non-coding RNA activators (including meiRNA), to prevent meiotic induction in vegetative cells and to regulate meiosis I. The protein is Checkpoint signal transducer rad24 of Schizosaccharomyces pombe (strain 972 / ATCC 24843) (Fission yeast).